A 346-amino-acid chain; its full sequence is MKLKTMTMEWTGDELILIDQRKIPLVEEYVSCKSYKEVAVAIKDMVVRGAPAIGASAAFGYVLGAREMFVEDFNAFVKKMEEVKEVLANTRPTAVNLFWALNRMEDSLKKYGKIEGILEYLEEEAMNIAKEDIEVNKAIGRYGAELLKDGDTVLTHCNAGALATVDYGTALGVIRAAVEQGKKIKVFADETRPYLQGARLTAWELMKDGIDVTLISDNMSGWSMKLGKINAVIVGADRVAANGDVANKIGTYMVAVLAKRHGIPFYVAAPTSTIDLNTKTGKDIPIEERKHTEVTHCGGKQIAPDGVKVFNPAFDVTDAELVTAIITEKGVVYPPYEENLKKLFEE.

Residues 48-50, R91, and Q196 each bind substrate; that span reads RGA. The active-site Proton donor is the D237. Residue 247–248 participates in substrate binding; that stretch reads NK.

It belongs to the eIF-2B alpha/beta/delta subunits family. MtnA subfamily.

It carries out the reaction 5-(methylsulfanyl)-alpha-D-ribose 1-phosphate = 5-(methylsulfanyl)-D-ribulose 1-phosphate. Its pathway is amino-acid biosynthesis; L-methionine biosynthesis via salvage pathway; L-methionine from S-methyl-5-thio-alpha-D-ribose 1-phosphate: step 1/6. In terms of biological role, catalyzes the interconversion of methylthioribose-1-phosphate (MTR-1-P) into methylthioribulose-1-phosphate (MTRu-1-P). In Thermosipho africanus (strain TCF52B), this protein is Methylthioribose-1-phosphate isomerase.